Here is a 444-residue protein sequence, read N- to C-terminus: Methylenetetrahydrofolate--tRNA-(uracil-5-)-methyltransferase TrmFO (444 aa).

10–15 (GAGLAG) serves as a coordination point for FAD.

The protein belongs to the MnmG family. TrmFO subfamily. It depends on FAD as a cofactor.

The protein resides in the cytoplasm. It catalyses the reaction uridine(54) in tRNA + (6R)-5,10-methylene-5,6,7,8-tetrahydrofolate + NADH + H(+) = 5-methyluridine(54) in tRNA + (6S)-5,6,7,8-tetrahydrofolate + NAD(+). The catalysed reaction is uridine(54) in tRNA + (6R)-5,10-methylene-5,6,7,8-tetrahydrofolate + NADPH + H(+) = 5-methyluridine(54) in tRNA + (6S)-5,6,7,8-tetrahydrofolate + NADP(+). In terms of biological role, catalyzes the folate-dependent formation of 5-methyl-uridine at position 54 (M-5-U54) in all tRNAs. This chain is Methylenetetrahydrofolate--tRNA-(uracil-5-)-methyltransferase TrmFO, found in Streptococcus pneumoniae (strain Taiwan19F-14).